The following is a 702-amino-acid chain: Dynein intermediate chain 2, ciliary (702 aa).

Residues 1-11 (MPVKSTKTKGG) are compositionally biased toward low complexity. 3 disordered regions span residues 1-64 (MPVK…IKPD), 128-226 (DEAR…FSST), and 243-272 (QEKAKEKKAAPSKKDDDKSKKKLTALETQS). Basic and acidic residues-rich tracts occupy residues 36–52 (GKKDDDDATEAGEHGGE) and 152–176 (GEEKKEEDGEQKTEEPKEGEKRDEE). Residues 189-206 (KLTNQFNFSERASQTYNN) show a composition bias toward polar residues. Residues 243–261 (QEKAKEKKAAPSKKDDDKS) are compositionally biased toward basic and acidic residues. WD repeat units lie at residues 380–420 (PTDS…ANPV), 429–472 (KHTD…LTYT), 490–533 (TQLT…QFLD), 537–577 (AHHM…GPMF), 580–620 (DLGS…YEPI), and 628–667 (KKKTKLTHITFNPNFPIVLVGDDRGYVSSLKLSPNLRKVP).

The protein belongs to the dynein intermediate chain family. As to quaternary structure, consists of at least two heavy chains (alpha and beta), three intermediate chains and several light chains.

The protein resides in the cytoplasm. It localises to the cytoskeleton. It is found in the cilium axoneme. Its function is as follows. Microtubule-binding protein that may be involved in dynein outer arm assembly on the axoneme. The protein is Dynein intermediate chain 2, ciliary of Heliocidaris crassispina (Sea urchin).